Reading from the N-terminus, the 122-residue chain is Large ribosomal subunit protein uL14 (122 aa).

The protein belongs to the universal ribosomal protein uL14 family. As to quaternary structure, part of the 50S ribosomal subunit. Forms a cluster with proteins L3 and L19. In the 70S ribosome, L14 and L19 interact and together make contacts with the 16S rRNA in bridges B5 and B8.

Functionally, binds to 23S rRNA. Forms part of two intersubunit bridges in the 70S ribosome. This is Large ribosomal subunit protein uL14 from Bartonella bacilliformis (strain ATCC 35685 / KC583 / Herrer 020/F12,63).